We begin with the raw amino-acid sequence, 149 residues long: MNKRAQSRSAARLAAVQALYQHEMEATPVAQLIHEFHQHRIGAIIEDAEYADADVPFFDDIVKGVLARADEIDAAITARLASGWTMERLDRTMKAILRAGTYELIARGDVPVGAVVSEYVDVAKAFFDGREAGFANGLLDAIGKDVRKK.

The protein belongs to the NusB family.

Its function is as follows. Involved in transcription antitermination. Required for transcription of ribosomal RNA (rRNA) genes. Binds specifically to the boxA antiterminator sequence of the ribosomal RNA (rrn) operons. The sequence is that of Transcription antitermination protein NusB from Sphingopyxis alaskensis (strain DSM 13593 / LMG 18877 / RB2256) (Sphingomonas alaskensis).